A 254-amino-acid polypeptide reads, in one-letter code: Type III pantothenate kinase (254 aa).

Position 22–29 (22–29 (VLGNTHVR)) interacts with ATP. Substrate is bound by residues tyrosine 89 and 93 to 96 (GLDR). Catalysis depends on aspartate 95, which acts as the Proton acceptor. Residue aspartate 115 participates in K(+) binding. Threonine 118 serves as a coordination point for ATP. Threonine 173 is a substrate binding site.

The protein belongs to the type III pantothenate kinase family. Homodimer. NH4(+) serves as cofactor. K(+) is required as a cofactor.

The protein localises to the cytoplasm. It catalyses the reaction (R)-pantothenate + ATP = (R)-4'-phosphopantothenate + ADP + H(+). Its pathway is cofactor biosynthesis; coenzyme A biosynthesis; CoA from (R)-pantothenate: step 1/5. Its function is as follows. Catalyzes the phosphorylation of pantothenate (Pan), the first step in CoA biosynthesis. The chain is Type III pantothenate kinase from Synechococcus sp. (strain JA-2-3B'a(2-13)) (Cyanobacteria bacterium Yellowstone B-Prime).